Reading from the N-terminus, the 333-residue chain is Ribosomal RNA small subunit methyltransferase C (333 aa).

The protein belongs to the methyltransferase superfamily. RsmC family. As to quaternary structure, monomer.

It localises to the cytoplasm. The catalysed reaction is guanosine(1207) in 16S rRNA + S-adenosyl-L-methionine = N(2)-methylguanosine(1207) in 16S rRNA + S-adenosyl-L-homocysteine + H(+). In terms of biological role, specifically methylates the guanine in position 1207 of 16S rRNA in the 30S particle. This chain is Ribosomal RNA small subunit methyltransferase C, found in Mannheimia succiniciproducens (strain KCTC 0769BP / MBEL55E).